We begin with the raw amino-acid sequence, 39 residues long: Potassium channel toxin alpha-KTx 2.5 (39 aa).

3 cysteine pairs are disulfide-bonded: C7–C29, C13–C34, and C17–C36.

It belongs to the short scorpion toxin superfamily. Potassium channel inhibitor family. Alpha-KTx 02 subfamily. Expressed by the venom gland.

The protein localises to the secreted. Potent selective inhibitor of Kv1.1/KCNA1, Kv1.2/KCNA2, Kv1.3/KCNA3 voltage-gated potassium channels. Weak inhibitor of Kv1.6/KCNA6 potassium channel. It also shows a weak interaction with nicotinic acetylcholine receptors (nAChR), suggesting it may weakly inhibit it. This Centruroides limbatus (Bark scorpion) protein is Potassium channel toxin alpha-KTx 2.5.